The chain runs to 689 residues: Glycine--tRNA ligase beta subunit (689 aa).

It belongs to the class-II aminoacyl-tRNA synthetase family. Tetramer of two alpha and two beta subunits.

It is found in the cytoplasm. The catalysed reaction is tRNA(Gly) + glycine + ATP = glycyl-tRNA(Gly) + AMP + diphosphate. This Shewanella piezotolerans (strain WP3 / JCM 13877) protein is Glycine--tRNA ligase beta subunit.